A 1942-amino-acid chain; its full sequence is Probable helicase with zinc finger domain (1942 aa).

Residues 178 to 206 (SEEYTLCKRFLEQGICRYGAQCTSAHSQE) form a C3H1-type zinc finger. Position 248 is a phosphoserine (serine 248). An ATP-binding site is contributed by 668–675 (GPYGTGKT). The short motif at 794–797 (DEAA) is the DEAA box element. Polar residues predominate over residues 1117 to 1127 (SGSTNKQQQSP). A disordered region spans residues 1117–1141 (SGSTNKQQQSPPKGKSLHHTQNDHF). Threonine 1163 is modified (phosphothreonine). At arginine 1245 the chain carries Omega-N-methylarginine. Disordered stretches follow at residues 1246–1345 (GSPI…INLP), 1386–1429 (NLPE…GPNN), 1527–1552 (QGSA…GLHQ), and 1608–1637 (RQVQ…FNDN). 2 stretches are compositionally biased toward basic and acidic residues: residues 1268 to 1281 (HQEK…RNGK) and 1292 to 1308 (NKIR…KQVD). Positions 1399–1412 (NQVVQQQSQLNQQP) are enriched in low complexity. Serine 1614 bears the Phosphoserine mark. Residues 1623–1636 (SSTDHSSHFSNFND) are compositionally biased toward low complexity. Phosphoserine occurs at positions 1645, 1738, 1741, and 1766. Disordered stretches follow at residues 1729 to 1779 (FHPL…TPQD), 1792 to 1843 (NQSS…PEDQ), and 1870 to 1942 (MPNK…SYFK). Residues 1731 to 1745 (PLSSRTVSSSSLPSL) show a composition bias toward low complexity. Polar residues-rich tracts occupy residues 1761–1779 (RISS…TPQD) and 1792–1825 (NQSS…SRTA). 2 stretches are compositionally biased toward low complexity: residues 1876 to 1888 (AESA…QSSA) and 1920 to 1942 (LSLF…SYFK).

The protein belongs to the DNA2/NAM7 helicase family. In terms of assembly, interacts with SMYD2. Interacts with POLR2A. Interacts with SMYD3; the interaction may bridge SMYD3 and RNA polymerase II. Expressed predominantly in thymus and brain. Expression is down-regulated in 28 of 95 tested cancer cell lines.

The protein localises to the nucleus. In terms of biological role, may act as a helicase that plays a role in RNA metabolism in multiple tissues and organs within the developing embryo. The polypeptide is Probable helicase with zinc finger domain (HELZ) (Homo sapiens (Human)).